The following is a 358-amino-acid chain: Trace amine-associated receptor 7e (358 aa).

Residues 1–47 (MATGDDSFLWDQDSILSRDLFSATSAELCYENLNRSCVRSPYSPGPR) are Extracellular-facing. N-linked (GlcNAc...) asparagine glycosylation is present at N34. Disulfide bonds link C37–C201 and C120–C205. The helical transmembrane segment at 48 to 68 (LILYAVFGFGAVLAVCGNLLV) threads the bilayer. The Cytoplasmic segment spans residues 69-83 (MTSILHFRQLHSPAN). The chain crosses the membrane as a helical span at residues 84–104 (FLVASLACADFLVGLTVMPFS). Over 105 to 121 (TVRSVEGCWYFGEIYCK) the chain is Extracellular. A helical transmembrane segment spans residues 122 to 143 (LHTCFDVSFCSSSIFHLCFISV). Residues 144 to 166 (DRYIAVSDPLIYPTRFTASVSNK) are Cytoplasmic-facing. A helical transmembrane segment spans residues 167–187 (CITFSWLLSISYGFSLIYTGA). The Extracellular portion of the chain corresponds to 188 to 212 (SEAGLEDLVSALTCVGGCQLAVNQS). N-linked (GlcNAc...) asparagine glycosylation is present at N210. The helical transmembrane segment at 213–233 (WVFINFLLFLIPTLVMITVYS) threads the bilayer. Over 234–274 (KIFLIAKQQAQNIEKMSKQTARASDSYKDRVAKRERKAAKT) the chain is Cytoplasmic. Residues 275–295 (LGIAVAAFLLSWLPYFIDSFI) form a helical membrane-spanning segment. The Extracellular portion of the chain corresponds to 296–309 (DAFLGFITPTYVYE). The helical transmembrane segment at 310–333 (ILVWIAYYNSAMNPLIYAFFYPWF) threads the bilayer. The Cytoplasmic portion of the chain corresponds to 334-358 (RKAIKLTVTGKILRENSSTTNLFPE).

This sequence belongs to the G-protein coupled receptor 1 family. Specifically expressed in neurons of the olfactory epithelium.

The protein localises to the cell membrane. Olfactory receptor specific for N,N-dimethylalkylamines trace amines. Trace amine compounds are enriched in animal body fluids and act on trace amine-associated receptors (TAARs) to elicit both intraspecific and interspecific innate behaviors. Ligand-binding causes a conformation change that triggers signaling via G(s)-class of G alpha proteins (GNAL or GNAS). The chain is Trace amine-associated receptor 7e from Mus musculus (Mouse).